Reading from the N-terminus, the 1289-residue chain is Trafficking protein particle complex II-specific subunit 120 (1289 aa).

Over residues 354-365 (STGISPVDSNSK) the composition is skewed to polar residues. The segment at 354–374 (STGISPVDSNSKATASTTASS) is disordered. Phosphoserine occurs at positions 379 and 387.

This sequence belongs to the TRS120 family. Part of the multisubunit TRAPP (transport protein particle) II complex composed of BET3, BET5, TRS20, TRS23, TRS31, TRS33, TRS65, TRS120 and TRS130. Interacts directly with TRS65.

It is found in the golgi apparatus. The protein resides in the cis-Golgi network. Specific subunit of the TRAPP II complex, a highly conserved vesicle tethering complex that functions in the late Golgi as a guanine nucleotide exchanger (GEF) for the Golgi YPT1 GTPase. TRS120 plays a role in the YPT GEF activity of TRAPP II in concert with the two other TRAPP II-specific subunits TRS65 and TRS130. This Saccharomyces cerevisiae (strain ATCC 204508 / S288c) (Baker's yeast) protein is Trafficking protein particle complex II-specific subunit 120 (TRS120).